Here is a 489-residue protein sequence, read N- to C-terminus: Cytochrome P450 2C3 (489 aa).

Cys434 is a heme binding site.

Belongs to the cytochrome P450 family. Heme is required as a cofactor.

It localises to the endoplasmic reticulum membrane. The protein resides in the microsome membrane. It catalyses the reaction an organic molecule + reduced [NADPH--hemoprotein reductase] + O2 = an alcohol + oxidized [NADPH--hemoprotein reductase] + H2O + H(+). Functionally, cytochromes P450 are a group of heme-thiolate monooxygenases. In liver microsomes, this enzyme is involved in an NADPH-dependent electron transport pathway. It oxidizes a variety of structurally unrelated compounds, including steroids, fatty acids, and xenobiotics. This Oryctolagus cuniculus (Rabbit) protein is Cytochrome P450 2C3 (CYP2C3).